A 506-amino-acid chain; its full sequence is Protein MGF 505-4R (506 aa).

The protein belongs to the asfivirus MGF 505 family.

Functionally, plays a role in virus cell tropism, and may be required for efficient virus replication in macrophages. This Ornithodoros (relapsing fever ticks) protein is Protein MGF 505-4R.